We begin with the raw amino-acid sequence, 648 residues long: L-aspartate oxidase 2-b, chloroplastic (648 aa).

FAD contacts are provided by residues 98–101, Lys-120, 127–134, and Asp-298; these read SGIA and STNYAQGG. Arg-373 serves as the catalytic Proton donor/acceptor. FAD is bound by residues Glu-458 and 474–475; that span reads SL.

It belongs to the FAD-dependent oxidoreductase 2 family. NadB subfamily. FAD is required as a cofactor.

It localises to the plastid. The protein localises to the chloroplast. It catalyses the reaction L-aspartate + O2 = iminosuccinate + H2O2. It participates in alkaloid biosynthesis; nicotine biosynthesis. The protein operates within cofactor biosynthesis; NAD(+) biosynthesis; iminoaspartate from L-aspartate (oxidase route): step 1/1. In terms of biological role, involved in the biosynthesis of pyridine alkaloid natural products, leading mainly to the production of anabasine, anatabine, nicotine and nornicotine, effective deterrents against herbivores with antiparasitic and pesticide properties (neurotoxins); nornicotine serves as the precursor in the synthesis of the carcinogen compound N'-nitrosonornicotine (NNN). Catalyzes the oxidation of L-aspartate to iminoaspartate. This chain is L-aspartate oxidase 2-b, chloroplastic, found in Nicotiana tabacum (Common tobacco).